A 467-amino-acid polypeptide reads, in one-letter code: Gamma-aminobutyric acid receptor subunit gamma-3 (467 aa).

A signal peptide spans 1–17; sequence MAPKLLLLLCLFSGLHA. Over 18–256 the chain is Extracellular; the sequence is RSRKVEEDEY…FELSRRMGYF (239 aa). Asn-110 is a glycosylation site (N-linked (GlcNAc...) asparagine). Cys-171 and Cys-185 are joined by a disulfide. A glycan (N-linked (GlcNAc...) asparagine) is linked at Asn-228. Residues 257–277 traverse the membrane as a helical segment; sequence TIQTYIPCILTVVLSWVSFWI. At 278–283 the chain is on the cytoplasmic side; that stretch reads KKDATP. The chain crosses the membrane as a helical span at residues 284–303; it reads ARTALGITTVLTMTTLSTIA. Residues 304–311 are Extracellular-facing; sequence RKSLPRVS. A helical transmembrane segment spans residues 312-332; it reads YVTAMDLFVTVCFLFVFAALM. At 333–446 the chain is on the cytoplasmic side; sequence EYATLNYYSS…DILELDSYSR (114 aa). A helical membrane pass occupies residues 447–467; it reads VFFPTSFLLFNLVYWVGYLYL.

The protein belongs to the ligand-gated ion channel (TC 1.A.9) family. Gamma-aminobutyric acid receptor (TC 1.A.9.5) subfamily. GABRG3 sub-subfamily. Heteropentamer, formed by a combination of alpha (GABRA1-6), beta (GABRB1-3), gamma (GABRG1-3), delta (GABRD), epsilon (GABRE), rho (GABRR1-3), pi (GABRP) and theta (GABRQ) chains, each subunit exhibiting distinct physiological and pharmacological properties. May be palmitoylated. Expressed in brain.

Its subcellular location is the postsynaptic cell membrane. It is found in the cell membrane. It carries out the reaction chloride(in) = chloride(out). In terms of biological role, gamma subunit of the heteropentameric ligand-gated chloride channel gated by gamma-aminobutyric acid (GABA), a major inhibitory neurotransmitter in the brain. GABA-gated chloride channels, also named GABA(A) receptors (GABAAR), consist of five subunits arranged around a central pore and contain GABA active binding site(s) located at the alpha and beta subunit interface(s). When activated by GABA, GABAARs selectively allow the flow of chloride across the cell membrane down their electrochemical gradient. The chain is Gamma-aminobutyric acid receptor subunit gamma-3 from Homo sapiens (Human).